A 786-amino-acid chain; its full sequence is Diamine oxidase [copper-containing] 1, peroxisomal (786 aa).

419 to 430 (AFDAGEDGLGKN) contacts substrate. Aspartate 421 (proton acceptor) is an active-site residue. An intrachain disulfide couples cysteine 440 to cysteine 466. Position 502–507 (502–507 (VANYEY)) interacts with substrate. Residue tyrosine 505 is the Schiff-base intermediate with substrate; via topaquinone of the active site. Tyrosine 505 is subject to 2',4',5'-topaquinone. Positions 555 and 557 each coordinate Cu cation. Mn(2+) contacts are provided by aspartate 710 and isoleucine 711. Histidine 721 serves as a coordination point for Cu cation.

The protein belongs to the copper/topaquinone oxidase family. In terms of assembly, homodimer. Cu cation is required as a cofactor. The cofactor is Zn(2+). It depends on L-topaquinone as a cofactor. Post-translationally, topaquinone (TPQ) is generated by copper-dependent autoxidation of a specific tyrosyl residue. As to expression, mainly expressed in roots, and, to a lower extent, in leaves and stems.

The protein localises to the peroxisome. The catalysed reaction is a primary methyl amine + O2 + H2O = an aldehyde + H2O2 + NH4(+). The enzyme catalyses N-methylputrescine + O2 + H2O = 4-methylaminobutanal + H2O2 + NH4(+). It functions in the pathway alkaloid biosynthesis; nicotine biosynthesis. The protein operates within amine and polyamine degradation; putrescine degradation. In terms of biological role, involved in putrescine catabolism in peroxisomes. May also be involved in the biosynthesis of pyridine alkaloid natural products, leading mainly to the production of anabasine, anatabine, nicotine and nornicotine, effective deterrents against herbivores with antiparasitic and pesticide properties (neurotoxins); nornicotine serves as the precursor in the synthesis of the carcinogen compound N'-nitrosonornicotine (NNN). Oxidizes preferentially non-N-methylated amines. The sequence is that of Diamine oxidase [copper-containing] 1, peroxisomal from Nicotiana tabacum (Common tobacco).